The sequence spans 258 residues: Type III pantothenate kinase (258 aa).

6–13 serves as a coordination point for ATP; the sequence is DVGNTNTV. Substrate-binding positions include Tyr100 and 107–110; that span reads GADR. The active-site Proton acceptor is the Asp109. Asp129 lines the K(+) pocket. An ATP-binding site is contributed by Thr132. Residue Thr184 coordinates substrate.

The protein belongs to the type III pantothenate kinase family. In terms of assembly, homodimer. The cofactor is NH4(+). Requires K(+) as cofactor.

Its subcellular location is the cytoplasm. It carries out the reaction (R)-pantothenate + ATP = (R)-4'-phosphopantothenate + ADP + H(+). It participates in cofactor biosynthesis; coenzyme A biosynthesis; CoA from (R)-pantothenate: step 1/5. Functionally, catalyzes the phosphorylation of pantothenate (Pan), the first step in CoA biosynthesis. The chain is Type III pantothenate kinase from Bacillus velezensis (strain DSM 23117 / BGSC 10A6 / LMG 26770 / FZB42) (Bacillus amyloliquefaciens subsp. plantarum).